A 247-amino-acid polypeptide reads, in one-letter code: MSGDRVLVQPAWVLHRRPWSESSLIVELFSRDFGRIGAVARGGRNSRRWRGLLEPFSPVLASWQGRGELRSLVAAEPDGARPALAGAALASGFYLNELLLRLLRRDDPHPELHPLYGDTLNRLPDEAALRGFECRLLEALGYGLLLLEDMGGEPVHGEAHYRYHLEHGPERLAAVPEAGEGLLVRGRTLLALAGREALAGPSLPEARRLMRAALSLYLGDRPLQSRALYRQLARTPRAATPASPNDH.

It belongs to the RecO family.

Involved in DNA repair and RecF pathway recombination. The sequence is that of DNA repair protein RecO from Alkalilimnicola ehrlichii (strain ATCC BAA-1101 / DSM 17681 / MLHE-1).